An 86-amino-acid chain; its full sequence is Large ribosomal subunit protein bL27 (86 aa).

Residues Met-1–Thr-10 are compositionally biased toward gly residues. The segment at Met-1–Arg-20 is disordered.

Belongs to the bacterial ribosomal protein bL27 family.

This is Large ribosomal subunit protein bL27 from Bordetella avium (strain 197N).